Consider the following 277-residue polypeptide: 3-methyl-2-oxobutanoate hydroxymethyltransferase (277 aa).

2 residues coordinate Mg(2+): aspartate 43 and aspartate 82. Residues 43–44, aspartate 82, and lysine 112 contribute to the 3-methyl-2-oxobutanoate site; that span reads DS. A Mg(2+)-binding site is contributed by glutamate 114. Residue glutamate 181 is the Proton acceptor of the active site.

This sequence belongs to the PanB family. In terms of assembly, homodecamer; pentamer of dimers. Requires Mg(2+) as cofactor.

The protein resides in the cytoplasm. The enzyme catalyses 3-methyl-2-oxobutanoate + (6R)-5,10-methylene-5,6,7,8-tetrahydrofolate + H2O = 2-dehydropantoate + (6S)-5,6,7,8-tetrahydrofolate. It functions in the pathway cofactor biosynthesis; (R)-pantothenate biosynthesis; (R)-pantoate from 3-methyl-2-oxobutanoate: step 1/2. Functionally, catalyzes the reversible reaction in which hydroxymethyl group from 5,10-methylenetetrahydrofolate is transferred onto alpha-ketoisovalerate to form ketopantoate. This is 3-methyl-2-oxobutanoate hydroxymethyltransferase from Listeria innocua serovar 6a (strain ATCC BAA-680 / CLIP 11262).